The following is a 132-amino-acid chain: Small ribosomal subunit protein uS12 (132 aa).

A 3-methylthioaspartic acid modification is found at aspartate 89. Residues 103–132 (DTSGVADRRQSRSKYGAKQPKEGGAAKGKK) are disordered.

The protein belongs to the universal ribosomal protein uS12 family. In terms of assembly, part of the 30S ribosomal subunit. Contacts proteins S8 and S17. May interact with IF1 in the 30S initiation complex.

In terms of biological role, with S4 and S5 plays an important role in translational accuracy. Functionally, interacts with and stabilizes bases of the 16S rRNA that are involved in tRNA selection in the A site and with the mRNA backbone. Located at the interface of the 30S and 50S subunits, it traverses the body of the 30S subunit contacting proteins on the other side and probably holding the rRNA structure together. The combined cluster of proteins S8, S12 and S17 appears to hold together the shoulder and platform of the 30S subunit. This is Small ribosomal subunit protein uS12 from Chlorobium phaeovibrioides (strain DSM 265 / 1930) (Prosthecochloris vibrioformis (strain DSM 265)).